The following is a 431-amino-acid chain: Glucose-1-phosphate adenylyltransferase (431 aa).

Lys39 contributes to the beta-D-fructose 1,6-bisphosphate binding site. AMP is bound by residues Arg40, His46, and Arg52. Tyr114 lines the alpha-D-glucose 1-phosphate pocket. Arg130 provides a ligand contact to AMP. Residues Gly179, 194 to 195, and Ser212 each bind alpha-D-glucose 1-phosphate; that span reads EK. Positions 370 and 386 each coordinate AMP. Beta-D-fructose 1,6-bisphosphate-binding positions include 419–423 and 429–431; these read REMLR and QER.

Belongs to the bacterial/plant glucose-1-phosphate adenylyltransferase family. Homotetramer.

It carries out the reaction alpha-D-glucose 1-phosphate + ATP + H(+) = ADP-alpha-D-glucose + diphosphate. It participates in glycan biosynthesis; glycogen biosynthesis. Allosterically activated by fructose-1,6-bisphosphate (F16BP) and inhibited by AMP. Its function is as follows. Involved in the biosynthesis of ADP-glucose, a building block required for the elongation reactions to produce glycogen. Catalyzes the reaction between ATP and alpha-D-glucose 1-phosphate (G1P) to produce pyrophosphate and ADP-Glc. The sequence is that of Glucose-1-phosphate adenylyltransferase from Escherichia coli O127:H6 (strain E2348/69 / EPEC).